A 1072-amino-acid polypeptide reads, in one-letter code: DNA-directed RNA polymerase subunit beta (1072 aa).

It belongs to the RNA polymerase beta chain family. In plastids the minimal PEP RNA polymerase catalytic core is composed of four subunits: alpha, beta, beta', and beta''. When a (nuclear-encoded) sigma factor is associated with the core the holoenzyme is formed, which can initiate transcription.

It localises to the plastid. The protein resides in the chloroplast. The catalysed reaction is RNA(n) + a ribonucleoside 5'-triphosphate = RNA(n+1) + diphosphate. Its function is as follows. DNA-dependent RNA polymerase catalyzes the transcription of DNA into RNA using the four ribonucleoside triphosphates as substrates. The protein is DNA-directed RNA polymerase subunit beta of Arabis hirsuta (Hairy rock-cress).